A 142-amino-acid chain; its full sequence is Large ribosomal subunit protein uL11 (142 aa).

Part of the ribosomal stalk of the 50S ribosomal subunit. Interacts with L10 and the large rRNA to form the base of the stalk. L10 forms an elongated spine to which L12 dimers bind in a sequential fashion forming a multimeric L10(L12)X complex. Post-translationally, lys-40 is trimethylated or acetylated; other modifications may also exist.

In terms of biological role, forms part of the ribosomal stalk which helps the ribosome interact with GTP-bound translation factors. The protein is Large ribosomal subunit protein uL11 of Rhodopseudomonas palustris (strain ATCC BAA-98 / CGA009).